The following is an 83-amino-acid chain: Exodeoxyribonuclease 7 small subunit (83 aa).

Belongs to the XseB family. In terms of assembly, heterooligomer composed of large and small subunits.

It localises to the cytoplasm. It catalyses the reaction Exonucleolytic cleavage in either 5'- to 3'- or 3'- to 5'-direction to yield nucleoside 5'-phosphates.. Functionally, bidirectionally degrades single-stranded DNA into large acid-insoluble oligonucleotides, which are then degraded further into small acid-soluble oligonucleotides. The chain is Exodeoxyribonuclease 7 small subunit from Rhodopseudomonas palustris (strain HaA2).